Consider the following 461-residue polypeptide: Cysteine--tRNA ligase (461 aa).

Zn(2+) is bound at residue Cys-28. The 'HIGH' region motif lies at 30-40 (ITVYDLCHIGH). 3 residues coordinate Zn(2+): Cys-209, His-234, and Glu-238. The 'KMSKS' region motif lies at 266–270 (KMSKS). Position 269 (Lys-269) interacts with ATP.

The protein belongs to the class-I aminoacyl-tRNA synthetase family. As to quaternary structure, monomer. Requires Zn(2+) as cofactor.

The protein localises to the cytoplasm. The enzyme catalyses tRNA(Cys) + L-cysteine + ATP = L-cysteinyl-tRNA(Cys) + AMP + diphosphate. The polypeptide is Cysteine--tRNA ligase (Shigella boydii serotype 18 (strain CDC 3083-94 / BS512)).